Reading from the N-terminus, the 101-residue chain is Urease subunit beta (101 aa).

This sequence belongs to the urease beta subunit family. Heterotrimer of UreA (gamma), UreB (beta) and UreC (alpha) subunits. Three heterotrimers associate to form the active enzyme.

The protein localises to the cytoplasm. It carries out the reaction urea + 2 H2O + H(+) = hydrogencarbonate + 2 NH4(+). It participates in nitrogen metabolism; urea degradation; CO(2) and NH(3) from urea (urease route): step 1/1. The polypeptide is Urease subunit beta (Actinobacillus pleuropneumoniae serotype 5b (strain L20)).